Here is a 969-residue protein sequence, read N- to C-terminus: Lateral signaling target protein 2 homolog (969 aa).

K87 is covalently cross-linked (Glycyl lysine isopeptide (Lys-Gly) (interchain with G-Cter in ubiquitin)). Disordered stretches follow at residues 290-323 (QDGE…GVEE), 336-360 (SVWK…EEPI), 390-437 (STLL…YHDD), and 715-777 (RSEC…DMSE). Residues 295–310 (PTSSTNDPSASTGPDS) show a composition bias toward polar residues. A compositionally biased stretch (basic and acidic residues) spans 336 to 346 (SVWKEEEEKQV). The segment covering 391–402 (TLLSPPSQNQSP) has biased composition (polar residues). A compositionally biased stretch (low complexity) spans 411 to 423 (GSSLEGSSATSST). The segment covering 715–729 (RSECFGKQSKDDNRK) has biased composition (basic and acidic residues). 2 stretches are compositionally biased toward low complexity: residues 732-745 (SSSQ…VPSS) and 756-769 (SLSS…VSSL). The segment at 899–959 (DEACNSCIAC…VCTHCYMFHV (61 aa)) adopts an FYVE-type zinc-finger fold. Residues C905, C908, C921, C924, C929, C932, C951, and C954 each contribute to the Zn(2+) site.

It belongs to the lst-2 family. Post-translationally, monoubiquitination at Lys-87 prevents binding to phosphatidylinositol 3-phosphate (PI3P) and localization to early endosome membranes.

It localises to the cytoplasm. It is found in the cytosol. The protein localises to the early endosome membrane. Negative regulator of epidermal growth factor receptor (EGFR) signaling. Acts by promoting EGFR degradation in endosomes when not monoubiquitinated. The polypeptide is Lateral signaling target protein 2 homolog (zfyve28) (Danio rerio (Zebrafish)).